A 108-amino-acid polypeptide reads, in one-letter code: UPF0060 membrane protein KPN78578_15550 (108 aa).

4 helical membrane-spanning segments follow: residues Leu-6–Leu-26, Gly-29–Leu-49, Ala-61–Val-81, and Tyr-86–Gly-106.

Belongs to the UPF0060 family.

Its subcellular location is the cell inner membrane. The sequence is that of UPF0060 membrane protein KPN78578_15550 from Klebsiella pneumoniae subsp. pneumoniae (strain ATCC 700721 / MGH 78578).